The following is a 199-amino-acid chain: uncharacterized protein (199 aa).

An N-terminal signal peptide occupies residues 1-23 (MKPGCTLFFLLCSALTVTTEAHA).

This is an uncharacterized protein from Escherichia coli (strain K12).